The primary structure comprises 233 residues: tRNA (guanine-N(1)-)-methyltransferase (233 aa).

S-adenosyl-L-methionine-binding positions include glycine 121 and 140–145 (IGDYIL).

This sequence belongs to the RNA methyltransferase TrmD family. Homodimer.

The protein resides in the cytoplasm. The catalysed reaction is guanosine(37) in tRNA + S-adenosyl-L-methionine = N(1)-methylguanosine(37) in tRNA + S-adenosyl-L-homocysteine + H(+). Specifically methylates guanosine-37 in various tRNAs. The polypeptide is tRNA (guanine-N(1)-)-methyltransferase (Endomicrobium trichonymphae).